The chain runs to 769 residues: Trehalose 6-phosphate phosphorylase (769 aa).

342–343 (WD) provides a ligand contact to substrate. Residue Glu480 is the Proton donor of the active site. 589–590 (KQ) lines the substrate pocket.

It belongs to the glycosyl hydrolase 65 family. As to quaternary structure, monomer.

It catalyses the reaction alpha,alpha-trehalose 6-phosphate + phosphate = beta-D-glucose 1-phosphate + D-glucose 6-phosphate. Functionally, catalyzes the conversion of trehalose 6-phosphate into glucose 1-phosphate and glucose 6-phosphate. This Lactococcus lactis subsp. lactis (strain IL1403) (Streptococcus lactis) protein is Trehalose 6-phosphate phosphorylase (trePP).